We begin with the raw amino-acid sequence, 72 residues long: MKLTCVLIVAVLFLTACQLTTAASYARSERQHPDLGSSDQNSKLTKRCLASGETCWRDTSCCSFSCTNNVCF.

Positions Met1 to Ala22 are cleaved as a signal peptide. A propeptide spanning residues Ala23–Thr45 is cleaved from the precursor. Intrachain disulfides connect Cys48–Cys62, Cys55–Cys66, and Cys61–Cys71.

Belongs to the conotoxin O1 superfamily. As to expression, expressed by the venom duct.

It is found in the secreted. The chain is Conotoxin VnMKLT2-021 from Conus ventricosus (Mediterranean cone).